A 316-amino-acid polypeptide reads, in one-letter code: Aspartate carbamoyltransferase catalytic subunit (316 aa).

Positions 59 and 60 each coordinate carbamoyl phosphate. An L-aspartate-binding site is contributed by Lys-88. Carbamoyl phosphate contacts are provided by Arg-109, His-137, and Gln-140. L-aspartate-binding residues include Arg-170 and Arg-232. Positions 269 and 270 each coordinate carbamoyl phosphate.

Belongs to the aspartate/ornithine carbamoyltransferase superfamily. ATCase family. As to quaternary structure, heterooligomer of catalytic and regulatory chains.

The enzyme catalyses carbamoyl phosphate + L-aspartate = N-carbamoyl-L-aspartate + phosphate + H(+). It functions in the pathway pyrimidine metabolism; UMP biosynthesis via de novo pathway; (S)-dihydroorotate from bicarbonate: step 2/3. Functionally, catalyzes the condensation of carbamoyl phosphate and aspartate to form carbamoyl aspartate and inorganic phosphate, the committed step in the de novo pyrimidine nucleotide biosynthesis pathway. The chain is Aspartate carbamoyltransferase catalytic subunit from Methanobrevibacter smithii (strain ATCC 35061 / DSM 861 / OCM 144 / PS).